A 110-amino-acid chain; its full sequence is UPF0145 protein MTH_507 (110 aa).

It belongs to the UPF0145 family.

The polypeptide is UPF0145 protein MTH_507 (Methanothermobacter thermautotrophicus (strain ATCC 29096 / DSM 1053 / JCM 10044 / NBRC 100330 / Delta H) (Methanobacterium thermoautotrophicum)).